Reading from the N-terminus, the 119-residue chain is UPF0738 protein BAA_1286 (119 aa).

This sequence belongs to the UPF0738 family.

This Bacillus anthracis (strain A0248) protein is UPF0738 protein BAA_1286.